Consider the following 537-residue polypeptide: MAASDADAAEVERLYELGERLSSAKDKSQHAADYEAIISAVKGQSVKAKQLAAQLIPRFFRSFPALAPRAMEAMFDLVDMEELATRIQAIRGFPLLAKDAEFVSKIADILGQLLASEENVERDAVHKALMSLIRQDVKSSLQPLFKHVESGSEIREKVICFLKDKVFPVKAELLKPQAEMERYITDLIKKSVLDVTGLEFKLFMDFLRSLSIFGDSAPRESFQELIEIIQAQADLDAQFNVSDIDHIERWTSCMYMALPIFMRGGSSSKFLNYFVKQIVPVFDKIPEEKKLDLLKTVAASSPYATAQDARQLLPPVVQLLKKYMPGKKVEDINHNYVECLMYIFHHLAHKTPNTTNSLCGYKIVTGQPSDRLGEDFSEHYKDFTERLTGTEETVRAVSKRLTQGMADFNKAISSAKTEEEKTKIKSDQQKSTMTMRAYNNILAMAQPLRAKSPLFIGDKKITLSWMEQPKKPAPTTTGGKRSQPATNGNTPASKKGRGEGAARNQLVNRAFEGLSRGGRGSGRGRGRGGRGRGWGYR.

The segment at 9 to 363 (AEVERLYELG…TTNSLCGYKI (355 aa)) is ARM-like and Heat-like helical repeats. The tract at residues 465–537 (WMEQPKKPAP…GGRGRGWGYR (73 aa)) is disordered. A compositionally biased stretch (polar residues) spans 474–492 (PTTTGGKRSQPATNGNTPA).

It belongs to the API5 family. Interacts with AIP1 and AIP2.

The protein localises to the nucleus. Functionally, putative anti-apoptotic factor involved in the regulation of tapetal programmed cell death (PCD) and degeneration during anther development. Interacts directly with the DEAD-box ATP-dependent RNA helicases AIP1 and AIP2 that form dimers and bind the promoter region of the cysteine protease CP1 involved in tapetum PCD. The chain is Apoptosis inhibitor 5-like protein API5 from Oryza sativa subsp. japonica (Rice).